We begin with the raw amino-acid sequence, 752 residues long: DNA ligase (752 aa).

The tract at residues 1 to 25 (MKRNGFVPSNSVGRRGIPSNSTSSA) is disordered. NAD(+)-binding positions include 91-95 (DADFD), 140-141 (SL), and Glu-170. Lys-172 functions as the N6-AMP-lysine intermediate in the catalytic mechanism. 4 residues coordinate NAD(+): Arg-193, Glu-233, Lys-350, and Lys-374. Zn(2+) is bound by residues Cys-474, Cys-477, Cys-493, and Cys-499. In terms of domain architecture, BRCT spans 669–752 (STPRTLAGLT…TLLDGGPAAL (84 aa)).

This sequence belongs to the NAD-dependent DNA ligase family. LigA subfamily. Requires Mg(2+) as cofactor. The cofactor is Mn(2+).

The catalysed reaction is NAD(+) + (deoxyribonucleotide)n-3'-hydroxyl + 5'-phospho-(deoxyribonucleotide)m = (deoxyribonucleotide)n+m + AMP + beta-nicotinamide D-nucleotide.. Functionally, DNA ligase that catalyzes the formation of phosphodiester linkages between 5'-phosphoryl and 3'-hydroxyl groups in double-stranded DNA using NAD as a coenzyme and as the energy source for the reaction. It is essential for DNA replication and repair of damaged DNA. The chain is DNA ligase from Nocardioides sp. (strain ATCC BAA-499 / JS614).